Reading from the N-terminus, the 283-residue chain is Alkaline ceramidase (283 aa).

Positions 28, 29, 31, 33, and 42 each coordinate Ca(2+). The next 2 helical transmembrane spans lie at 43 to 63 (FVNTFSNFLFILLPPVLIMLF) and 69 to 89 (FVTPGIHVIWVLLIVVGLSSM). His92 contributes to the Zn(2+) binding site. 4 helical membrane-spanning segments follow: residues 98 to 118 (IGQLLDELAILWVFMAAFSLF), 134 to 151 (TFSWLMLLSAIAATGLSW), 154 to 174 (PIVNAFVLMFMSVPTMVMLYT), and 187 to 209 (LGIRSTTVWAVAVFCWINDRIFC). Positions 221 and 225 each coordinate Zn(2+). A helical membrane pass occupies residues 222 to 242 (GFWHIFIFIAAYTVLVLFAYF).

This sequence belongs to the alkaline ceramidase family. It depends on Zn(2+) as a cofactor. As to expression, expressed in the central midgut of late embryos. In brain, it is present at the interhemispheric junction and in groups of cells in the central brain.

The protein localises to the membrane. The enzyme catalyses an N-acylsphing-4-enine + H2O = sphing-4-enine + a fatty acid. In terms of biological role, hydrolyzes the sphingolipid ceramide into sphingosine and free fatty acid. This chain is Alkaline ceramidase (bwa), found in Drosophila melanogaster (Fruit fly).